An 872-amino-acid chain; its full sequence is Alanine--tRNA ligase (872 aa).

4 residues coordinate Zn(2+): H567, H571, C669, and H673.

Belongs to the class-II aminoacyl-tRNA synthetase family. Zn(2+) is required as a cofactor.

It is found in the cytoplasm. The catalysed reaction is tRNA(Ala) + L-alanine + ATP = L-alanyl-tRNA(Ala) + AMP + diphosphate. Catalyzes the attachment of alanine to tRNA(Ala) in a two-step reaction: alanine is first activated by ATP to form Ala-AMP and then transferred to the acceptor end of tRNA(Ala). Also edits incorrectly charged Ser-tRNA(Ala) and Gly-tRNA(Ala) via its editing domain. This chain is Alanine--tRNA ligase, found in Streptococcus agalactiae serotype V (strain ATCC BAA-611 / 2603 V/R).